Reading from the N-terminus, the 268-residue chain is Small ribosomal subunit protein uS2 (268 aa).

The disordered stretch occupies residues 228-268; that stretch reads QLDSEQDYEDFDESISDEYDDYEDEEEYEEQDLEVDASEDE. Positions 231 to 268 are enriched in acidic residues; sequence SEQDYEDFDESISDEYDDYEDEEEYEEQDLEVDASEDE.

Belongs to the universal ribosomal protein uS2 family.

The protein is Small ribosomal subunit protein uS2 of Rippkaea orientalis (strain PCC 8801 / RF-1) (Cyanothece sp. (strain PCC 8801)).